The following is a 555-amino-acid chain: Potassium-transporting ATPase potassium-binding subunit (555 aa).

Transmembrane regions (helical) follow at residues 2 to 22 (IWVA…PTGI), 60 to 80 (QYAL…YFIF), 130 to 150 (IGIT…VMAF), 173 to 193 (VFLP…VPQT), 246 to 266 (MSNI…PFTY), 278 to 298 (ILFV…TTSE), 374 to 394 (AGFV…GLMV), 412 to 432 (LIAV…ALAL), 483 to 503 (LVMF…AASL), and 525 to 545 (GIFI…MLVL).

Belongs to the KdpA family. As to quaternary structure, the system is composed of three essential subunits: KdpA, KdpB and KdpC.

It localises to the cell membrane. Part of the high-affinity ATP-driven potassium transport (or Kdp) system, which catalyzes the hydrolysis of ATP coupled with the electrogenic transport of potassium into the cytoplasm. This subunit binds the extracellular potassium ions and delivers the ions to the membrane domain of KdpB through an intramembrane tunnel. The polypeptide is Potassium-transporting ATPase potassium-binding subunit (Bacillus mycoides (strain KBAB4) (Bacillus weihenstephanensis)).